We begin with the raw amino-acid sequence, 215 residues long: Nascent polypeptide-associated complex subunit alpha (215 aa).

Positions 1–82 are disordered; sequence MPGEATETVP…EKKARKAMSK (82 aa). Positions 9-28 are enriched in polar residues; that stretch reads VPVTEQEMQQPQAETGSGTE. Residues 29–42 show a composition bias toward acidic residues; it reads SDSDESVPDLEEGD. The span at 44-57 shows a compositional bias: low complexity; the sequence is AQTQTQQAQLAAAA. Residues 70 to 135 enclose the NAC-A/B domain; the sequence is SRSEKKARKA…AKIEDLSQQA (66 aa). Residue serine 166 is modified to Phosphoserine. In terms of domain architecture, UBA spans 176 to 213; it reads VEVKDIELVMSQANVSRAKAVRALKNNNNDIVNAIMEL.

It belongs to the NAC-alpha family.

May promote appropriate targeting of ribosome-nascent polypeptide complexes. This is Nascent polypeptide-associated complex subunit alpha (naca) from Danio rerio (Zebrafish).